Consider the following 1430-residue polypeptide: Target of rapamycin complex 2 subunit TSC11 (1430 aa).

Residues 1–62 (MSIPHSAKQS…TITNESSKRN (62 aa)) are disordered. Composition is skewed to polar residues over residues 7–26 (AKQS…TTPL) and 35–44 (NSSTQISSAK). Ser-19 is modified (phosphoserine). A compositionally biased stretch (low complexity) spans 45-57 (NITSSSPSTITNE). Residues Ser-81, Ser-84, Ser-87, and Ser-141 each carry the phosphoserine modification. The stretch at 91-180 (ARRTRSTMTK…EKHIFDLKQQ (90 aa)) forms a coiled coil. The disordered stretch occupies residues 182–285 (DKKRQRSLTT…NLTGDTEKDL (104 aa)). Positions 233–265 (TTPTSGTERNSQQNLNRNSTVNSRNNENHSTLS) are enriched in polar residues. Residues 995-1100 (SVVAVADQAL…FQQKSRLPLH (106 aa)) enclose the N-terminal Ras-GEF domain.

It belongs to the RICTOR family. The target of rapamycin complex 2 (TORC2) is composed of at least AVO1, AVO2, BIT61, LST8, TOR2 and TSC11. TORC2 forms a homodimer. Contrary to TORC1, TORC2 does not bind to and is not sensitive to FKBP-rapamycin. TSC11 binds to the N-terminal HEAT repeat region in TOR2 and is required for TORC2 integrity by tethering AVO1 and AVO2 to the complex. Post-translationally, phosphorylated by TOR2; when part of TORC2.

Its subcellular location is the cell membrane. The protein resides in the vacuole membrane. Its function is as follows. Essential component of TORC2, which regulates cell cycle-dependent polarization of the actin-cytoskeleton and cell wall integrity. TORC2 controls polarity of the actin cytoskeleton, which is required for orienting the secretory pathway toward discrete growth sites, via the RHO1/PKC1/MAPK cell integrity pathway. TSC11 may exert its functions through two distinct mechanisms, one mediated by AVO1 and the other mediated by AVO2 and SLM1. The sequence is that of Target of rapamycin complex 2 subunit TSC11 (TSC11) from Saccharomyces cerevisiae (strain ATCC 204508 / S288c) (Baker's yeast).